The following is a 137-amino-acid chain: Small ribosomal subunit protein uS11 (137 aa).

The disordered stretch occupies residues 116–137; the sequence is EDVTPVPSDSTRKKGGRRGRRL. A compositionally biased stretch (basic residues) spans 128–137; that stretch reads KKGGRRGRRL.

The protein belongs to the universal ribosomal protein uS11 family.

The chain is Small ribosomal subunit protein uS11 (RPS14) from Kluyveromyces lactis (strain ATCC 8585 / CBS 2359 / DSM 70799 / NBRC 1267 / NRRL Y-1140 / WM37) (Yeast).